The following is a 668-amino-acid chain: RNA-binding protein PIN4 (668 aa).

The segment at 1–77 (METSSFENAP…NLNNAPTNGA (77 aa)) is disordered. Positions 8 to 23 (NAPPAAINDAQDNNIN) are enriched in low complexity. Over residues 24–36 (TETNDQETNQQSI) the composition is skewed to polar residues. Residues 37–46 (ETRDAIDKEN) show a composition bias toward basic and acidic residues. Over residues 47–74 (GVQTETGENSAKNAEQNVSSTNLNNAPT) the composition is skewed to polar residues. The residue at position 56 (S56) is a Phosphoserine. In terms of domain architecture, RRM spans 85–163 (NAIVIKNIPF…RKLKVEYKKM (79 aa)). Basic and acidic residues predominate over residues 168–188 (ERERIEREKREKRGQLEEQHR). The tract at residues 168–214 (ERERIEREKREKRGQLEEQHRSSSNLSLDSLSKMSGSGNNNTSNNQL) is disordered. Phosphoserine occurs at positions 189, 191, 194, and 197. A compositionally biased stretch (low complexity) spans 189 to 212 (SSSNLSLDSLSKMSGSGNNNTSNN). At T305 the chain carries Phosphothreonine. 2 disordered regions span residues 374 to 398 (QQQG…NRSQ) and 420 to 570 (VNNS…QRVP). S393 is modified (phosphoserine). Low complexity predominate over residues 420 to 449 (VNNSSNSNTINSNNGNGNNVIINNNSASST). The span at 450–478 (PKISSQGQFSMQPTLTSPKMNIHHSSQYN) shows a compositional bias: polar residues. Phosphoserine is present on S466. Over residues 479–508 (SADQPQQPQPQTQQNVQSAAQQQQSFLRQQ) the composition is skewed to low complexity. Residues 509–551 (ATLTPSSRIPSGYSANHYQINSVNPLLRNSQISPPNSQIPINS) are compositionally biased toward polar residues. S541 carries the post-translational modification Phosphoserine. A compositionally biased stretch (low complexity) spans 552–567 (QTLSQAQPPAQSQTQQ). Residues S636, S638, S640, S653, and S655 each carry the phosphoserine modification.

Interacts with RAD53. In terms of processing, hyperphosphorylated in response to DNA damage by MEC1.

It is found in the cytoplasm. Its function is as follows. Involved in normal G2/M phase transition of the mitotic cell cycle. In association with RAD53, also involved in checkpoint control in response to DNA damage. The sequence is that of RNA-binding protein PIN4 (PIN4) from Saccharomyces cerevisiae (strain ATCC 204508 / S288c) (Baker's yeast).